The following is a 406-amino-acid chain: Transforming growth factor beta regulator 1 (406 aa).

2 disordered regions span residues 1–28 (MSVL…PRKS) and 109–144 (SSVG…ENSK). Serine 2 bears the N-acetylserine mark. Phosphothreonine is present on threonine 13. A compositionally biased stretch (basic and acidic residues) spans 134–144 (EKKEKGKENSK). The FYR N-terminal domain maps to 177–236 (VFPIGLGGLTVYSLGEIITNRPGFHDENAIYPVGYCSTRVYASMKCPDQKCLYTCQIKDG). The 80-residue stretch at 237–316 (GVQPQFEIVP…QNCVNYQWVK (80 aa)) folds into the FYR C-terminal domain.

Belongs to the TBRG1 family. As to quaternary structure, interacts with CDKN2A and MDM2. In terms of processing, ubiquitinated; mediated by MDM2 and leading to its subsequent proteasomal degradation.

The protein resides in the nucleus. Its function is as follows. Acts as a growth inhibitor. Can activate p53/TP53, causes G1 arrest and collaborates with CDKN2A to restrict proliferation, but does not require either protein to inhibit DNA synthesis. Redistributes CDKN2A into the nucleoplasm. Involved in maintaining chromosomal stability. This is Transforming growth factor beta regulator 1 (Tbrg1) from Mus musculus (Mouse).